The following is a 556-amino-acid chain: MDKRHDPSRRIIAPTGTKLSCKSWLTEAPMRMLMNNLHPDVAERPEDLVVYGGIGRAARDWECYDKIVEVLQRLEDDETLLVQSGKPVGVFKTHSNAPRVIIANSNLVPHWANWEHFNELDKKGLAMYGQMTAGSWIYIGSQGIVQGTYETFVAMAKQHFGGSSKGKWILTGGLGGMGGAQPLAGTMAGYSVLTCEVDETRIDFRLRTRYVDKKATTLDEALAMIDEANASGKPVSVGLLANAADVFAELVERGITPDVVTDQTSAHDPLNGYLPQGWTLEQAAQMRKTDEAAVVKAAKQSMAVQVKAMLALQAAGSATTDYGNNIRQMAFEEGVENAFDFPGFVPAYVRPLFCEGIGPFRWAALSGDPEDIYKTDAKVKELIPDNPHLHNWLDMARERIAFQGLPSRICWVGLKDRARLALAFNEMVNNGELSAPVVIGRDHLDSGSVASPNRETESMLDGSDAVSDWPLMNALLNTASGATWVSLHHGGGVGMGFSQHSGVVIVADGTDDAAARLGRVLWNDPATGVMRHADAGYDIAKDCAKEQGLDLPMLEK.

Residues 52 to 53 (GG), Q130, 176 to 178 (GMG), E196, R201, 242 to 243 (NA), 263 to 267 (QTSAH), 273 to 274 (YL), and Y322 contribute to the NAD(+) site. The active site involves C410. G492 serves as a coordination point for NAD(+).

The protein belongs to the urocanase family. Requires NAD(+) as cofactor.

The protein localises to the cytoplasm. The enzyme catalyses 4-imidazolone-5-propanoate = trans-urocanate + H2O. It functions in the pathway amino-acid degradation; L-histidine degradation into L-glutamate; N-formimidoyl-L-glutamate from L-histidine: step 2/3. In terms of biological role, catalyzes the conversion of urocanate to 4-imidazolone-5-propionate. The protein is Urocanate hydratase of Shewanella piezotolerans (strain WP3 / JCM 13877).